A 101-amino-acid chain; its full sequence is Protein translation factor SUI1 homolog (101 aa).

This sequence belongs to the SUI1 family.

This Methanoregula boonei (strain DSM 21154 / JCM 14090 / 6A8) protein is Protein translation factor SUI1 homolog.